Here is a 139-residue protein sequence, read N- to C-terminus: ATP synthase epsilon chain (139 aa).

It belongs to the ATPase epsilon chain family. As to quaternary structure, F-type ATPases have 2 components, CF(1) - the catalytic core - and CF(0) - the membrane proton channel. CF(1) has five subunits: alpha(3), beta(3), gamma(1), delta(1), epsilon(1). CF(0) has three main subunits: a, b and c.

The protein localises to the cell inner membrane. Produces ATP from ADP in the presence of a proton gradient across the membrane. The sequence is that of ATP synthase epsilon chain from Pseudomonas entomophila (strain L48).